The following is a 324-amino-acid chain: MATH domain and coiled-coil domain-containing protein At3g44790 (324 aa).

Residues 3 to 125 (YEKFTWVIKN…NNEVKIVVEV (123 aa)) enclose the MATH domain. Residues 241–309 (FKVDWLERKL…ALLEKEKAKS (69 aa)) are a coiled coil.

The sequence is that of MATH domain and coiled-coil domain-containing protein At3g44790 from Arabidopsis thaliana (Mouse-ear cress).